Reading from the N-terminus, the 77-residue chain is Apelin (77 aa).

The first 22 residues, 1–22 (MNLRLCVQALLLLWLSLTAVCG), serve as a signal peptide directing secretion. Residues 23-41 (GSLMPLPDGNGLEDGNVRH) constitute a propeptide that is removed on maturation. The segment at 43–77 (VQPRGSRNGPGPWQGGRRKFRRQRPRLSHKGPMPF) is disordered. Over residues 58–71 (GRRKFRRQRPRLSH) the composition is skewed to basic residues.

It belongs to the apelin family. Post-translationally, several active peptides may be produced by proteolytic processing of the peptide precursor. In terms of tissue distribution, expressed in the brain with highest levels in the frontal cortex, thalamus, hypothalamus and midbrain. Secreted by the mammary gland into the colostrum and the milk.

It localises to the secreted. The protein localises to the extracellular space. Functionally, peptide hormone that functions as endogenous ligand for the G-protein-coupled apelin receptor (APLNR/APJ), that plays a role in cadiovascular homeostasis. Functions as a balanced agonist activating both G(i) protein pathway and beta-arrestin pathway of APLNR. Downstream G proteins activation, apelin can inhibit cAMP production and activate key intracellular effectors such as ERKs. On the other hand, APLNR activation induces beta-arrestin recruitment to the membrane leading to desensitization and internalization of the receptor. Apelin blunts cardiac hypertrophic induction from APLNR on response to pathological stimuli, but also induces myocardial hypertrophy under normal conditions. Apelin-36 dissociates more hardly than (pyroglu)apelin-13 from APLNR. Involved in the regulation of cardiac precursor cell movements during gastrulation and heart morphogenesis. Has an inhibitory effect on cytokine production in response to T-cell receptor/CD3 cross-linking; the oral intake of apelin in the colostrum and the milk might therefore modulate immune responses in neonates. Plays a role in early coronary blood vessels formation. Mediates myocardial contractility in an ERK1/2-dependent manner. May also have a role in the central control of body fluid homeostasis by influencing vasopressin release and drinking behavior. Its function is as follows. (Microbial infection) Endogenous ligand for the apelin receptor (APLNR), an alternative coreceptor with CD4 for HIV-1 infection. Inhibits HIV-1 entry in cells coexpressing CD4 and APLNR. Apelin-36 has a greater inhibitory activity on HIV infection than other synthetic apelin derivatives. The polypeptide is Apelin (Homo sapiens (Human)).